Reading from the N-terminus, the 1191-residue chain is MSFLDDNNACGQNLLNIVSVGNSIIAEILRLKDYVPSIYRLDNKADKAKYGELILDFSYFKIAEDHERRIEQSPELTELDDEARAQLPLITRFYLAFQSIHHYASDLQQYIEELNTGYYIQQTLETVLQEEEGRQLLCESLYLFGVILLMVDFHIPGDVRERLLIAYYRYSGGDATPSGDESNIHDVCLLLRSTGYVHPSIAAKVLGLGGKQAGARAASLVVPRYPEAYFSRFRFDENFVDLVVARLRCDDIYNQLNLYPHPAHRSTALSTQAAMLYVCLYFCPQVLHSQGSQMREIVDKFFCDNWTISVYMGMTVNLVDAWLDFKAARSAIENVISPPAIKALCQQQKEQLGKITQKTQEIVREGVLNDNFVLEHANKIIHLMRQSNVLLRWFCLHTSREVFIFAHTATLTGQVQKCVLHELQFNRNTLYNLLLNCSQMELSVREFLAEIQQTKEERWTKSREEAMQRLNELSEAFAGSRPLSKIEQNPQLQQWFGEVAGRLQKLELSRPQKSGRLIIQVMQALDDVQEYHNLHSNMLVKQQLQETRDMLNQMAQLINLKEDIEIHIQMITDFSYAWHLLQFDFTPPMQEHIKRQPQAVIGIRAVFLKLASTLEVPLMRINQARSEDLVSVSNYYSTELANFLRRVLQIVPETMFSILAKIIYLLTNVIKEFPTKVEKERLKDYAQFEERAKVAQLTNSIAVFTKGILMMKTTLVGVIELDPKQLLEDGIRKELVNHLANAYNLGLIFTPEKGKTPVQLLQQKLQALAKTIEGYRRSFEYIEDYLRVQGLRILLEESQRIINYNVEKECNAFLRNKVQEFQSEHQSQIIPIPNFPPLLGDPSNNFIGRLAHEILRCTDPKQTIFLDLKSTWYEKKAPHQEVLAGSGFFEILREALAPAGMVGLERLYAHMLADELKRNLERLQRNLTSDRMWVDTLAALTRELEARDFPTPEVSKQPLKYYQAYTQRWLKVWPTLLDWVLCIGQKQLLRREIAGELSFSSKCDAKLLENTADTLNKALLLELSLSKDLCDEKGVVMLTELQETLLYTGNFEPLEQVFLITKNTHNMALFMFLFTIAHLGRMQHSTITDCLLPKSAKDNIDNVPFIVGLVTILQQFHKNVKMLYISYMSQYVVTVSEAQLLDKEILGPEVVTALHFLLAFIRIARLPLGVLEQRIPNIILSEYEYLSTLLK.

It belongs to the strumpellin family. Component of the WASH complex.

The protein localises to the early endosome. Acts at least in part as component of the WASH complex which may regulate wash nucleation-promoting factor (NPF) activity and is required for its membrane targeting during endosomal sorting. During embryogenesis, not involved in the wash-dependent developmental migration of hemocytes anteriorly from the tail. The protein is WASH complex subunit homolog 5 of Drosophila melanogaster (Fruit fly).